A 207-amino-acid chain; its full sequence is Large ribosomal subunit protein uL4 (207 aa).

The tract at residues 48–89 (SHKVKNRSEVRGGGRKPWRQKGTGRARQGSIRSPQWRGGGVV) is disordered. Over residues 60–71 (GGRKPWRQKGTG) the composition is skewed to basic residues.

The protein belongs to the universal ribosomal protein uL4 family. In terms of assembly, part of the 50S ribosomal subunit.

One of the primary rRNA binding proteins, this protein initially binds near the 5'-end of the 23S rRNA. It is important during the early stages of 50S assembly. It makes multiple contacts with different domains of the 23S rRNA in the assembled 50S subunit and ribosome. Its function is as follows. Forms part of the polypeptide exit tunnel. In Bacillus velezensis (strain DSM 23117 / BGSC 10A6 / LMG 26770 / FZB42) (Bacillus amyloliquefaciens subsp. plantarum), this protein is Large ribosomal subunit protein uL4.